Here is a 456-residue protein sequence, read N- to C-terminus: uncharacterized protein (456 aa).

The 59-residue stretch at Ala2–Glu60 folds into the TRAM domain. [4Fe-4S] cluster is bound by residues Cys73, Cys79, Cys82, and Cys162. S-adenosyl-L-methionine-binding residues include Gln288, Tyr317, Glu338, and Asp383. Residue Cys410 is the Nucleophile of the active site.

The protein belongs to the class I-like SAM-binding methyltransferase superfamily. RNA M5U methyltransferase family.

This is an uncharacterized protein from Clostridium tetani (strain Massachusetts / E88).